A 455-amino-acid polypeptide reads, in one-letter code: Venom prothrombin activator trocarin-D (455 aa).

Residues 1 to 20 (MAPQLLLCLILTFLWSLPEA) form the signal peptide. Positions 21–40 (ESNVFLKSKVANRFLQRTKR) are excised as a propeptide. One can recognise a Gla domain in the interval 41–86 (SNSLFEEIRPGNIERECIEEKCSKEEAREVFEDNEKTETFWNVYVD). 4-carboxyglutamate is present on residues glutamate 46, glutamate 47, glutamate 54, glutamate 56, glutamate 59, glutamate 60, glutamate 65, glutamate 66, glutamate 69, glutamate 72, and glutamate 75. Cysteines 57 and 62 form a disulfide. In terms of domain architecture, EGF-like 1; calcium-binding spans 86 to 122 (DGDQCSSNPCHYRGTCKDGIGSYTCTCLPNYEGKNCE). Disulfide bonds link cysteine 90–cysteine 101, cysteine 95–cysteine 110, cysteine 112–cysteine 121, cysteine 129–cysteine 140, cysteine 136–cysteine 149, cysteine 151–cysteine 164, cysteine 172–cysteine 328, cysteine 216–cysteine 221, cysteine 236–cysteine 252, cysteine 376–cysteine 390, and cysteine 401–cysteine 429. An O-linked (Hex...) serine glycan is attached at serine 92. Positions 129–164 (CRVDNGNCWHFCKRVQSETQCSCAESYRLGVDGHSC) constitute an EGF-like 2 domain. The propeptide at 182–209 (REASLPDFVQSQKATLLKKSDNPSPDIR) is activation peptide. A Peptidase S1 domain is found at 210 to 453 (IVNGMDCKLG…FIPWIKKIMS (244 aa)). The Charge relay system role is filled by histidine 251. Asparagine 254 carries an N-linked (GlcNAc...) asparagine glycan. The active-site Charge relay system is the aspartate 308. Residue serine 405 is the Charge relay system of the active site.

This sequence belongs to the peptidase S1 family. Snake venom subfamily. In terms of assembly, heterodimer of a light chain and a heavy chain; disulfide-linked. Post-translationally, gamma-carboxyglutamate residues are formed by vitamin K dependent carboxylation. These residues are essential for the binding of calcium. The O-linked saccharides at Ser-92 are a mixture of Xyl-Glc, and Glc along with smaller amounts of Xyl-GlcNAc, GlcNAc, Gal, GalNAc, Xyl-Gal, and Xyl-GalNAc, suggesting that the glycosyl transferases responsible for this modification are non-specific. The N-linked carbohydrate at Asn-254 (Asn-45 of the heavy chain) is a sialylated and diantennary oligosaccharide. Expressed by the venom gland.

It localises to the secreted. It carries out the reaction Selective cleavage of Arg-|-Thr and then Arg-|-Ile bonds in prothrombin to form thrombin.. With respect to regulation, activated by calcium and phospholipids. In terms of biological role, snake prothrombin activator that attacks the hemostatic system of prey. This protein is functionally similar to blood coagulation factor Xa. Induces cyanosis and death in mice at 1 mg/kg body weight during blood clotting. The protein is Venom prothrombin activator trocarin-D of Tropidechis carinatus (Australian rough-scaled snake).